The sequence spans 133 residues: Nucleoid-associated protein Mb3743c (133 aa).

The segment at 98–133 is disordered; sequence GAMRPPAPPAAPPGAPGMPGMPGMPGAPGAPPVPGI. Pro residues predominate over residues 102–113; that stretch reads PPAPPAAPPGAP.

It belongs to the YbaB/EbfC family. Homodimer.

It localises to the cytoplasm. Its subcellular location is the nucleoid. Its function is as follows. Binds to DNA and alters its conformation. May be involved in regulation of gene expression, nucleoid organization and DNA protection. In Mycobacterium bovis (strain ATCC BAA-935 / AF2122/97), this protein is Nucleoid-associated protein Mb3743c.